We begin with the raw amino-acid sequence, 56 residues long: Attractin (56 aa).

Intrachain disulfides connect Cys-4/Cys-41, Cys-13/Cys-33, and Cys-20/Cys-26.

As to expression, produced by the albumen gland of the egg cordons.

The protein localises to the secreted. Functionally, water-borne pheromone that attract the marine mollusk Aplysia into breeding aggregations and coordinate male and female reproductive behavior within the aggregation. In Aplysia vaccaria (California black sea hare), this protein is Attractin (ATT).